The following is a 452-amino-acid chain: GTPase Der (452 aa).

2 consecutive EngA-type G domains span residues Lys-9 to Asp-170 and Leu-185 to Asn-362. GTP is bound by residues Gly-15–Ser-22, Asp-62–Leu-66, Asn-124–Glu-127, Gly-191–Ser-198, Asp-238–Leu-242, and Asn-303–Asp-306. A KH-like domain is found at Lys-363–Lys-448.

The protein belongs to the TRAFAC class TrmE-Era-EngA-EngB-Septin-like GTPase superfamily. EngA (Der) GTPase family. Associates with the 50S ribosomal subunit.

Functionally, GTPase that plays an essential role in the late steps of ribosome biogenesis. The protein is GTPase Der of Rickettsia bellii (strain RML369-C).